The primary structure comprises 671 residues: Phospholipid:diacylglycerol acyltransferase 1 (671 aa).

Residues 1–46 (MPLIHRKKPTEKPSTPPSEEVVHDEDSQKKPHESSKSHHKKSNGGG) form a disordered region. The Cytoplasmic segment spans residues 1–54 (MPLIHRKKPTEKPSTPPSEEVVHDEDSQKKPHESSKSHHKKSNGGGKWSCIDSC). Residues 20–36 (EVVHDEDSQKKPHESSK) show a composition bias toward basic and acidic residues. A helical transmembrane segment spans residues 55 to 75 (CWFIGCVCVTWWFLLFLYNAM). The Lumenal segment spans residues 76 to 671 (PASFPQYVTE…EWSERIDLKL (596 aa)). A glycan (N-linked (GlcNAc...) asparagine) is linked at N161. S254 acts as the Acyl-ester intermediate in catalysis. N-linked (GlcNAc...) asparagine glycosylation is found at N381 and N434. Residues D573 and H626 each act as charge relay system in the active site. N647 carries N-linked (GlcNAc...) asparagine glycosylation.

Belongs to the AB hydrolase superfamily. Lipase family. In terms of tissue distribution, ubiquitous. Highest expression in young developing seeds.

It localises to the membrane. The enzyme catalyses a glycerophospholipid + a 1,2-diacyl-sn-glycerol = a monoacylglycerophospholipid + a triacyl-sn-glycerol. It functions in the pathway glycerolipid metabolism; triacylglycerol biosynthesis. Its function is as follows. Triacylglycerol formation by an acyl-CoA independent pathway. The enzyme preferentially transfers acyl groups from the sn-2 position of a phospholipid to diacylglycerol, thus forming an sn-1-lysophospholipid. Involved in epoxy and hydroxy fatty acid accumulation in seeds. Has complementary functions with DAG1 that are essential for triacylglycerol synthesis and normal development of both seeds and pollen. In Arabidopsis thaliana (Mouse-ear cress), this protein is Phospholipid:diacylglycerol acyltransferase 1 (PDAT1).